The following is a 569-amino-acid chain: MLO-like protein 10 (569 aa).

At 1 to 41 (MATRCFWCWTTLLFCSQLLTGFARASSAGGAKEKGLSQTPT) the chain is on the extracellular side. A helical transmembrane segment spans residues 42-62 (WAVALVCTFFILVSVLLEKAL). The Cytoplasmic portion of the chain corresponds to 63-85 (HRVATWLWEKHKNSLLEALEKIK). The helical transmembrane segment at 86-106 (AELMILGFISLLLTFGEQYIL) threads the bilayer. Residues 107-163 (KICIPEKAAASMLPCPAPSTHDQDKTHRRRLAAATTSSRCDEGHEPLIPATGLHQLH) lie on the Extracellular side of the membrane. A helical transmembrane segment spans residues 164 to 184 (ILLFFMAAFHILYSFITMMLG). Over 185-286 (RLKIRGWKKW…IKRSLEDDFK (102 aa)) the chain is Cytoplasmic. A helical membrane pass occupies residues 287–307 (VVVGISPLLWASFVIFLLLNV). N308 is a topological domain (extracellular). A helical membrane pass occupies residues 309 to 329 (GWEALFWASILPVLIILAVST). Over 330–372 (KLQAILTRMALGITERHAVVQGIPLVHGSDKYFWFNRPQLLLH) the chain is Cytoplasmic. A helical transmembrane segment spans residues 373–393 (LLHFALFQNAFQLTYFFWVWY). Over 394–413 (SFGLKSCFHTDFKLVIVKLS) the chain is Extracellular. The helical transmembrane segment at 414–434 (LGVGALILCSYITLPLYALVT) threads the bilayer. At 435–569 (QMGSNMKKAV…VKNVPANDID (135 aa)) the chain is on the cytoplasmic side. Residues 447–468 (EQMAKALKKWHMTVKKKKGKAR) are calmodulin-binding.

This sequence belongs to the MLO family.

It is found in the membrane. In terms of biological role, may be involved in modulation of pathogen defense and leaf cell death. Activity seems to be regulated by Ca(2+)-dependent calmodulin binding and seems not to require heterotrimeric G proteins. The chain is MLO-like protein 10 (MLO10) from Arabidopsis thaliana (Mouse-ear cress).